The primary structure comprises 923 residues: Protocadherin gamma-B4 (923 aa).

An N-terminal signal peptide occupies residues Met1–Cys30. 6 consecutive Cadherin domains span residues Glu31–Phe133, Thr134–Phe242, Ser243–Val345, Ile346–Phe450, Ser451–Val560, and Asp568–Ile673. Topologically, residues Glu31 to Tyr689 are extracellular. N-linked (GlcNAc...) asparagine glycans are attached at residues Asn417 and Asn543. The chain crosses the membrane as a helical span at residues Leu690–Ala710. The Cytoplasmic portion of the chain corresponds to Leu711 to Lys923. Disordered regions lie at residues Ser797 to Asn832 and Ala893 to Lys923. Positions Asn913–Lys923 are enriched in basic residues.

The protein resides in the cell membrane. Functionally, potential calcium-dependent cell-adhesion protein. May be involved in the establishment and maintenance of specific neuronal connections in the brain. The protein is Protocadherin gamma-B4 (PCDHGB4) of Homo sapiens (Human).